We begin with the raw amino-acid sequence, 243 residues long: Orotidine 5'-phosphate decarboxylase (243 aa).

Residues Asp-18, Lys-39, 66–75 (DLKFHDIPAT), Thr-130, Arg-192, Gln-201, Gly-221, and Arg-222 contribute to the substrate site. The active-site Proton donor is the Lys-68.

Belongs to the OMP decarboxylase family. Type 1 subfamily. In terms of assembly, homodimer.

The catalysed reaction is orotidine 5'-phosphate + H(+) = UMP + CO2. The protein operates within pyrimidine metabolism; UMP biosynthesis via de novo pathway; UMP from orotate: step 2/2. Functionally, catalyzes the decarboxylation of orotidine 5'-monophosphate (OMP) to uridine 5'-monophosphate (UMP). This is Orotidine 5'-phosphate decarboxylase from Synechococcus sp. (strain CC9902).